The primary structure comprises 717 residues: Polyribonucleotide nucleotidyltransferase (717 aa).

Mg(2+)-binding residues include Asp-495 and Asp-501. The 63-residue stretch at 562 to 624 (PRMIMIQIPK…TALDSALSQI (63 aa)) folds into the KH domain. One can recognise an S1 motif domain in the interval 634–703 (GEVYEGKVKS…KTGKYRLSRK (70 aa)).

The protein belongs to the polyribonucleotide nucleotidyltransferase family. The cofactor is Mg(2+).

The protein localises to the cytoplasm. It catalyses the reaction RNA(n+1) + phosphate = RNA(n) + a ribonucleoside 5'-diphosphate. Involved in mRNA degradation. Catalyzes the phosphorolysis of single-stranded polyribonucleotides processively in the 3'- to 5'-direction. The protein is Polyribonucleotide nucleotidyltransferase of Cytophaga hutchinsonii (strain ATCC 33406 / DSM 1761 / CIP 103989 / NBRC 15051 / NCIMB 9469 / D465).